Here is a 194-residue protein sequence, read N- to C-terminus: Fe/S biogenesis protein NfuA (194 aa).

Cys151 and Cys154 together coordinate [4Fe-4S] cluster.

This sequence belongs to the NfuA family. As to quaternary structure, homodimer. It depends on [4Fe-4S] cluster as a cofactor.

Functionally, involved in iron-sulfur cluster biogenesis. Binds a 4Fe-4S cluster, can transfer this cluster to apoproteins, and thereby intervenes in the maturation of Fe/S proteins. Could also act as a scaffold/chaperone for damaged Fe/S proteins. The chain is Fe/S biogenesis protein NfuA from Mannheimia succiniciproducens (strain KCTC 0769BP / MBEL55E).